The sequence spans 309 residues: Probable 4-hydroxy-2-oxoglutarate aldolase, mitochondrial (309 aa).

A substrate-binding site is contributed by S49–N50. Catalysis depends on K173, which acts as the Schiff-base intermediate with substrate.

It belongs to the DapA family.

It carries out the reaction (4S)-4-hydroxy-2-oxoglutarate = glyoxylate + pyruvate. The catalysed reaction is (4R)-4-hydroxy-2-oxoglutarate = glyoxylate + pyruvate. Its activity is regulated as follows. Inhibited by divalent cations. Its function is as follows. Catalyzes the final step in the metabolic pathway of hydroxyproline. Involved in osmoadaptation. This chain is Probable 4-hydroxy-2-oxoglutarate aldolase, mitochondrial, found in Emericella nidulans (strain FGSC A4 / ATCC 38163 / CBS 112.46 / NRRL 194 / M139) (Aspergillus nidulans).